The following is a 229-amino-acid chain: 7-cyano-7-deazaguanine synthase (229 aa).

An ATP-binding site is contributed by 15–25 (LSGGLDSTTCL). Positions 192, 202, 205, and 208 each coordinate Zn(2+).

This sequence belongs to the QueC family. Zn(2+) serves as cofactor.

The catalysed reaction is 7-carboxy-7-deazaguanine + NH4(+) + ATP = 7-cyano-7-deazaguanine + ADP + phosphate + H2O + H(+). It participates in purine metabolism; 7-cyano-7-deazaguanine biosynthesis. Catalyzes the ATP-dependent conversion of 7-carboxy-7-deazaguanine (CDG) to 7-cyano-7-deazaguanine (preQ(0)). The polypeptide is 7-cyano-7-deazaguanine synthase (Acinetobacter baylyi (strain ATCC 33305 / BD413 / ADP1)).